A 214-amino-acid chain; its full sequence is MVAQFNKFIILGPPGAGKGTVCKLLSKTTKLVHIASGDLFREAIKNQSVIGRKIAAIISQGGYVDDATTNQLVYEYITTNPLPNGFILDGYPRTENQLDFLNIKLTIDMVFELVVSDLNKLITRIDNRVICNNCNSVYNLLFQKPLVENSCDQCSAKLVKRSDDNKAVVKARMELYQQTIQPIHTYFFNKQLLVQIDCFLPLEEQLKTIKQFIR.

15–20 (GAGKGT) lines the ATP pocket. The segment at 35–64 (ASGDLFREAIKNQSVIGRKIAAIISQGGYV) is NMP. AMP-binding positions include serine 36, arginine 41, 62-64 (GYV), 90-93 (GYPR), and glutamine 97. The segment at 127–164 (NRVICNNCNSVYNLLFQKPLVENSCDQCSAKLVKRSDD) is LID. An ATP-binding site is contributed by arginine 128. Zn(2+) contacts are provided by cysteine 131 and cysteine 134. 137-138 (VY) contacts ATP. Zn(2+)-binding residues include cysteine 151 and cysteine 154. AMP is bound by residues arginine 161 and arginine 172. Residue leucine 200 coordinates ATP.

This sequence belongs to the adenylate kinase family. In terms of assembly, monomer.

The protein resides in the cytoplasm. The enzyme catalyses AMP + ATP = 2 ADP. It participates in purine metabolism; AMP biosynthesis via salvage pathway; AMP from ADP: step 1/1. In terms of biological role, catalyzes the reversible transfer of the terminal phosphate group between ATP and AMP. Plays an important role in cellular energy homeostasis and in adenine nucleotide metabolism. The chain is Adenylate kinase from Mycoplasma genitalium (strain ATCC 33530 / DSM 19775 / NCTC 10195 / G37) (Mycoplasmoides genitalium).